Consider the following 428-residue polypeptide: Putative FBD-associated F-box protein At5g56390 (428 aa).

Positions 2 to 50 (DKISQLHDELLLGILSLLPNAKDVVATMVLSKRWRYLWMMVPSLVYDDS) constitute an F-box domain. The 51-residue stretch at 344–394 (CWNETSLVPEYLLPSLETFEWVDYEGTKTEKQVVAFILRIASCLKQATIVS) folds into the FBD domain.

This chain is Putative FBD-associated F-box protein At5g56390, found in Arabidopsis thaliana (Mouse-ear cress).